The chain runs to 366 residues: 4-hydroxy-3-methylbut-2-en-1-yl diphosphate synthase (flavodoxin) (366 aa).

Residues Cys-270, Cys-273, Cys-305, and Glu-312 each contribute to the [4Fe-4S] cluster site.

This sequence belongs to the IspG family. [4Fe-4S] cluster is required as a cofactor.

It carries out the reaction (2E)-4-hydroxy-3-methylbut-2-enyl diphosphate + oxidized [flavodoxin] + H2O + 2 H(+) = 2-C-methyl-D-erythritol 2,4-cyclic diphosphate + reduced [flavodoxin]. The protein operates within isoprenoid biosynthesis; isopentenyl diphosphate biosynthesis via DXP pathway; isopentenyl diphosphate from 1-deoxy-D-xylulose 5-phosphate: step 5/6. Converts 2C-methyl-D-erythritol 2,4-cyclodiphosphate (ME-2,4cPP) into 1-hydroxy-2-methyl-2-(E)-butenyl 4-diphosphate. The protein is 4-hydroxy-3-methylbut-2-en-1-yl diphosphate synthase (flavodoxin) of Wigglesworthia glossinidia brevipalpis.